The primary structure comprises 279 residues: Large ribosomal subunit protein uL3 (279 aa).

The residue at position 151 (Gln-151) is an N5-methylglutamine.

This sequence belongs to the universal ribosomal protein uL3 family. As to quaternary structure, part of the 50S ribosomal subunit. Forms a cluster with proteins L14 and L19. In terms of processing, methylated by PrmB.

In terms of biological role, one of the primary rRNA binding proteins, it binds directly near the 3'-end of the 23S rRNA, where it nucleates assembly of the 50S subunit. In Dinoroseobacter shibae (strain DSM 16493 / NCIMB 14021 / DFL 12), this protein is Large ribosomal subunit protein uL3.